Here is a 4468-residue protein sequence, read N- to C-terminus: MAKMGKYGLGFKWAPEFPWMLPNASEKLGNPERSEEDGFCPSAAQEPKVKGKTLVNHVRVNCSRLPALECCVQSAIIRDIFVDEDPQKVEASTMMALQFGSAVLVKPSKRLSIQAWTNLGVLPKTAAMGLFKRVCLCNTRECSCDAHVAFHLFTVQPDGVCLGNGRFIGWFVPVTAIPEYAKQWLQPWSILLRKGGNKGSVTSGHFRRAVTMPVYDFNVEDACEEVHLNPKGKYSCKAYALLKGYRGVKPILFVDQYGCDYTGCLAKGLEDYGDLTLSEMKELFPVWRDSLDSEVLVAWHVDRDPRAAMRLQTLATVRCIDYVGQPTEDVVDGDVVVREPAHLLAANAIVKRLPRLVETMLYTDSSVTEFCYKTKLCECGFITQFGYVDCCGDTCDFRGWVAGNMMDGFPCPGCTKNYMPWELEAQSSGVIPEGGVLFTQSTDTVNRESFKLYGHAVVPFGSAVYWSPCPGMWLPVIWSSVKSYSGLTYTGVVGCKAIVQETDAICRSLYMDYVQHKCGNLEQRAILGLDDVYHRQLLVNRGDYSLLLENVDLFVKRRAEFACKFATCGDGLVPLLLDGLVPRSYYLIKSGQAFTSMMVNFSHEVTDMCMDMALLFMHDVKVATKYVKKVTGKLAVRFKALGVAVVRKITEWFDLAVDIAASAAGWLCYQLVNGLFAVANGVITFVQEVPELVKNFVDKFKAFFKVLIDSMSVSILSGLTVVKTASNRVCLAGSKVYEVVQKSLSAYVMPVGCSEATCLVGEIEPAVFEDDVVDVVKAPLTYQGCCKPPTSFEKICIVDKLYMAKCGDQFYPVVVDNDTVGVLDQCWRFPCAGKKVEFNDKPKVRKIPSTRKIKITFALDATFDSVLSKACSEFEVDKDVTLDELLDVVLDAVESTLSPCKEHDVIGTKVCALLDRLAGDYVYLFDEGGDEVIAPRMYCSFSAPDDEDCVAADVVDADENQDDDAEDSAVLVADTQEEDGVAKGQVEADSEICVAHTGSQEELAEPDAVGSQTPIASAEETEVGEASDREGIAEAKATVCADAVDACPDQVEAFEIEKVEDSILDELQTELNAPADKTYEDVLAFDAVCSEALSAFYAVPSDETHFKVCGFYSPAIERTNCWLRSTLIVMQSLPLEFKDLEMQKLWLSYKAGYDQCFVDKLVKSVPKSIILPQGGYVADFAYFFLSQCSFKAYANWRCLECDMELKLQGLDAMFFYGDVVSHMCKCGNSMTLLSADIPYTLHFGVRDDKFCAFYTPRKVFRAACAVDVNDCHSMAVVEGKQIDGKVVTKFIGDKFDFMVGYGMTFSMSPFELAQLYGSCITPNVCFVKGDVIKVVRLVNAEVIVNPANGRMAHGAGVAGAIAEKAGSAFIKETSDMVKAQGVCQVGECYESAGGKLCKKVLNIVGPDARGHGKQCYSLLERAYQHINKCDNVVTTLISAGIFSVPTDVSLTYLLGVVTKNVILVSNNQDDFDVIEKCQVTSVAGTKALSLQLAKNLCRDVKFVTNACSSLFSESCFVSSYDVLQEVEALRHDIQLDDDARVFVQANMDCLPTDWRLVNKFDSVDGVRTIKYFECPGGIFVSSQGKKFGYVQNGSFKEASVSQIRALLANKVDVLCTVDGVNFRSCCVAEGEVFGKTLGSVFCDGINVTKVRCSAIYKGKVFFQYSDLSEADLVAVKDAFGFDEPQLLKYYTMLGMCKWPVVVCGNYFAFKQSNNNCYINVACLMLQHLSLKFPKWQWQEAWNEFRSGKPLRFVSLVLAKGSFKFNEPSDSIDFMRVVLREADLSGATCNLEFVCKCGVKQEQRKGVDAVMHFGTLDKGDLVRGYNIACTCGSKLVHCTQFNVPFLICSNTPEGRKLPDDVVAANIFTGGSVGHYTHVKCKPKYQLYDACNVNKVSEAKGNFTDCLYLKNLKQTFSSVLTTFYLDDVKCVEYKPDLSQYYCESGKYYTKPIIKAQFRTFEKVDGVYTNFKLVGHSIAEKLNAKLGFDCNSPFVEYKITEWPTATGDVVLASDDLYVSRYSSGCITFGKPVVWLGHEEASLKSLTYFNRPSVVCENKFNVLPVDVSEPTDKGPVPAAVLVTGVPGADASAGAGIAKEQKACASASVEDQVVTEVRQEPSVSAADVKEVKLNGVKKPVKVEGSVVVNDPTSETKVVKSLSIVDVYDMFLTGCKYVVWTANELSRLVNSPTVREYVKWGMGKIVTPAKLLLLRDEKQEFVAPKVVKAKAIACYCAVKWFLLYCFSWIKFNTDNKVIYTTEVASKLTFKLCCLAFKNALQTFNWSVVSRGFFLVATVFLLWFNFLYANVILSDFYLPNIGPLPTFVGQIVAWFKTTFGVSTICDFYQVTDLGYRSSFCNGSMVCELCFSGFDMLDNYDAINVVQHVVDRRLSFDYISLFKLVVELVIGYSLYTVCFYPLFVLIGMQLLTTWLPEFFMLETMHWSARLFVFVANMLPAFTLLRFYIVVTAMYKVYCLCRHVMYGCSKPGCLFCYKRNRSVRVKCSTVVGGSLRYYDVMANGGTGFCTKHQWNCLNCNSWKPGNTFITHEAAADLSKELKRPVNPTDSAYYSVTEVKQVGCSMRLFYERDGQRVYDDVNASLFVDMNGLLHSKVKGVPETHVVVVENEADKAGFLGAAVFYAQSLYRPMLMVEKKLITTANTGLSVSRTMFDLYVDSLLNVLDVDRKSLTSFVNAAHNSLKEGVQLEQVMDTFIGCARRKCAIDSDVETKSITKSVMSAVNAGVDFTDESCNNLVPTYVKSDTIVAADLGVLIQNNAKHVQANVAKAANVACIWSVDAFNQLSADLQHRLRKACSKTGLKIKLTYNKQEANVPILTTPFSLKGGAVFSRMLQWLFVANLICFIVLWALMPTYAVHKSDMQLPLYASFKVIDNGVLRDVSVTDACFANKFNQFDQWYESTFGLAYYRNSKACPVVVAVIDQDIGHTLFNVPTTVLRYGFHVLHFITHAFATDSVQCYTPHMQIPYDNFYASGCVLSSLCTMLAHADGTPHPYCYTGGVMHNASLYSSLAPHVRYNLASSNGYIRFPEVVSEGIVRVVRTRSMTYCRVGLCEEAEEGICFNFNRSWVLNNPYYRAMPGTFCGRNAFDLIHQVLGGLVRPIDFFALTASSVAGAILAIIVVLAFYYLIKLKRAFGDYTSVVVINVIVWCINFLMLFVFQVYPTLSCLYACFYFYTTLYFPSEISVVMHLQWLVMYGAIMPLWFCIIYVAVVVSNHALWLFSYCRKIGTEVRSDGTFEEMALTTFMITKESYCKLKNSVSDVAFNRYLSLYNKYRYFSGKMDTAAYREAACSQLAKAMETFNHNNGNDVLYQPPTASVTTSFLQSGIVKMVSPTSKVEPCIVSVTYGNMTLNGLWLDDKVYCPRHVICSSADMTDPDYPNLLCRVTSSDFCVMSGRMSLTVMSYQMQGCQLVLTVTLQNPNTPKYSFGVVKPGETFTVLAAYNGRPQGAFHVTLRSSHTIKGSFLCGSCGSVGYVLTGDSVRFVYMHQLELSTGCHTGTDFSGNFYGPYRDAQVVQLPVQDYTQTVNVVAWLYAAIFNRCNWFVQSDSCSLEEFNVWAMTNGFSSIKADLVLDALASMTGVTVEQVLAAIKRLHSGFQGKQILGSCVLEDETPSDVYQQLAGVKLQSKRTRVIKGTCCWILASTFLFCSIISAFVKWTMFMYVTTHMLGVTLCALCFVSFAMLLIKHKHLYLTMYIMPVLCTFYTNYLVVYKQSFRGLAYAWLSHFVPAVDYTYMDEVLYGVVLLVAMVFVTMRSINHDVFSIMFLVGRLVSLVSMWYFGANLEEEVLLFLTSLFGTYTWTTMLSLATAKVIAKWLAVNVLYFTDVPQIKLVLLSYLCIGYVCCCYWGILSLLNSIFRMPLGVYNYKISVQELRYMNANGLRPPRNSFEALMLNFKLLGIGGVPVIEVSQIQSRLTDVKCANVVLLNCLQHLHIASNSKLWQYCSTLHNEILATSDLSMAFDKLAQLLVVLFANPAAVDSKCLASIEEVSDDYVRDNTVLQALQSEFVNMASFVEYELAKKNLDEAKASGSANQQQIKQLEKACNIAKSAYERDRAVARKLERMADLALTNMYKEARINDKKSKVVSALQTMLFSMVRKLDNQALNSILDNAVKGCVPLNAIPSLTSNTLTIIVPDKQVFDQVVDNVYVTYAGNVWHIQFIQDADGAVKQLNEIDVNSTWPLVIAANRHNEVSTVVLQNNELMPQKLRTQVVNSGSDMNCNTPTQCYYNTTGTGKIVYAILSDCDGLKYTKIVKEDGNCVVLELDPPCKFSVQDVKGLKIKYLYFVKGCNTLARGWVVGTLSSTVRLQAGTATEYASNSAILSLCAFSVDPKKTYLDYIKQGGVPVTNCVKMLCDHAGTGMAITIKPEATTNQDSYGGASVCIYCRSRVEHPDVDGLCKLRGKFVQVPLGIKDPVSYVLTHDVCQVCGFWRDGSCSCVGTGSQFQSKDTNFLNGFGVQV.

The CoV Nsp1 globular domain occupies 54-196 (LVNHVRVNCS…PWSILLRKGG (143 aa)). The BetaCoV Nsp1 C-terminal domain occupies 217–247 (FNVEDACEEVHLNPKGKYSCKAYALLKGYRG). The 261-residue stretch at 251–511 (ILFVDQYGCD…TDAICRSLYM (261 aa)) folds into the CoV Nsp2 N-terminal domain. Zn(2+)-binding residues include Cys-390, Cys-395, Cys-411, and Cys-414. The C4 stretch occupies residues 390-414 (CCGDTCDFRGWVAGNMMDGFPCPGC). The CoV Nsp2 middle domain occupies 518-706 (CGNLEQRAIL…VDKFKAFFKV (189 aa)). A CoV Nsp2 C-terminal domain is found at 726–832 (SNRVCLAGSK…LDQCWRFPCA (107 aa)). Residues 834 to 946 (KKVEFNDKPK…MYCSFSAPDD (113 aa)) form the Ubiquitin-like 1 domain. The interval 999–1027 (SQEELAEPDAVGSQTPIASAEETEVGEAS) is disordered. The region spanning 1084 to 1333 (AFDAVCSEAL…VCFVKGDVIK (250 aa)) is the Peptidase C16 1 domain. The active-site For PL1-PRO activity is the Cys-1121. Zn(2+)-binding residues include Cys-1198, Cys-1201, Cys-1224, and Cys-1226. Residues 1198–1226 (CLECDMELKLQGLDAMFFYGDVVSHMCKC) form a C4-type 1 zinc finger. Catalysis depends on for PL1-PRO activity residues His-1272 and Asp-1283. Residues 1323–1482 (NVCFVKGDVI…VIEKCQVTSV (160 aa)) enclose the Macro domain. Residues 1537 to 1609 (DDARVFVQAN…VSQIRALLAN (73 aa)) form the DPUP domain. A Ubiquitin-like 2 domain is found at 1608-1663 (ANKVDVLCTVDGVNFRSCCVAEGEVFGKTLGSVFCDGINVTKVRCSAIYKGKVFFQ). One can recognise a Peptidase C16 2 domain in the interval 1678 to 1937 (AFGFDEPQLL…CVEYKPDLSQ (260 aa)). The active-site For PL2-PRO activity is the Cys-1716. Zn(2+) is bound by residues Cys-1794, Cys-1796, Cys-1828, and Cys-1830. The C4-type 2 zinc finger occupies 1794–1830 (CKCGVKQEQRKGVDAVMHFGTLDKGDLVRGYNIACTC). Catalysis depends on for PL2-PRO activity residues His-1873 and Asp-1887. Residues 1951 to 2052 (IKAQFRTFEK…TYFNRPSVVC (102 aa)) form the Nucleic acid-binding domain. A G2M domain is found at 2107 to 2256 (QVVTEVRQEP…TDNKVIYTTE (150 aa)). The tract at residues 2225–2645 (AIACYCAVKW…QSLYRPMLMV (421 aa)) is HD1. 2 consecutive transmembrane segments (helical) span residues 2286–2306 (FFLV…NVIL) and 2314–2334 (IGPL…TFGV). Positions 2322–2383 (GQIVAWFKTT…AINVVQHVVD (62 aa)) constitute a 3Ecto domain. 2 cysteine pairs are disulfide-bonded: Cys-2338/Cys-2362 and Cys-2353/Cys-2359. 2 helical membrane passes run 2400-2420 (LVIG…LIGM) and 2442-2462 (LFVF…YIVV). The Y1 stretch occupies residues 2470–2560 (CLCRHVMYGC…ELKRPVNPTD (91 aa)). The 368-residue stretch at 2470–2837 (CLCRHVMYGC…LTTPFSLKGG (368 aa)) folds into the CoV Nsp3 Y domain. Positions 2474, 2479, 2484, 2487, 2520, 2523, 2527, and 2530 each coordinate Zn(2+). The tract at residues 2474–2487 (HVMYGCSKPGCLFC) is ZF1. A ZF2 region spans residues 2520–2530 (CTKHQWNCLNC). Positions 2561–2653 (SAYYSVTEVK…MVEKKLITTA (93 aa)) are Y2. A coV-Y region spans residues 2561–2837 (SAYYSVTEVK…LTTPFSLKGG (277 aa)). Residues 2625-2645 (AGFLGAAVFYAQSLYRPMLMV) traverse the membrane as a helical segment. Residues 2654–2736 (NTGLSVSRTM…KSVMSAVNAG (83 aa)) are Y3. Positions 2737 to 2837 (VDFTDESCNN…LTTPFSLKGG (101 aa)) are Y4. Transmembrane regions (helical) follow at residues 2847-2867 (LFVA…TYAV), 3096-3116 (AFDL…FFAL), 3118-3138 (ASSV…YYLI), 3150-3170 (VVVI…VFQV), 3177-3197 (LYAC…SVVM), and 3202-3222 (LVMY…AVVV). The HD2 stretch occupies residues 2847–3222 (LFVANLICFI…FCIIYVAVVV (376 aa)). A Nsp4C domain is found at 3236–3333 (IGTEVRSDGT…TASVTTSFLQ (98 aa)). The 302-residue stretch at 3334 to 3635 (SGIVKMVSPT…YQQLAGVKLQ (302 aa)) folds into the Peptidase C30 domain. Residues His-3374 and Cys-3478 each act as for 3CL-PRO activity in the active site. Positions 3526 to 3860 (LPVQDYTQTV…VCCCYWGILS (335 aa)) are HD3. Transmembrane regions (helical) follow at residues 3644-3664 (GTCC…SAFV), 3674-3694 (THML…MLLI), 3699-3719 (LYLT…YLVV), 3742-3762 (TYMD…FVTM), 3769-3789 (VFSI…WYFG), 3796-3816 (VLLF…LSLA), and 3840-3860 (LVLL…GILS). Positions 3922 to 4010 (SRLTDVKCAN…DYVRDNTVLQ (89 aa)) constitute a RdRp Nsp7 cofactor domain. One can recognise a RdRp Nsp8 cofactor domain in the interval 4011-4207 (ALQSEFVNMA…HNEVSTVVLQ (197 aa)). A Nsp9 ssRNA-binding domain is found at 4208 to 4317 (NNELMPQKLR…GTLSSTVRLQ (110 aa)). An ExoN/MTase coactivator domain is found at 4318–4455 (AGTATEYASN…CVGTGSQFQS (138 aa)). Zn(2+)-binding residues include Cys-4391, Cys-4394, His-4400, Cys-4407, Cys-4433, Cys-4436, Cys-4444, and Cys-4446. Zinc fingers lie at residues 4391-4407 (CIYC…DGLC) and 4433-4446 (CQVC…SCSC).

The protein belongs to the coronaviruses polyprotein 1ab family. In terms of assembly, 3CL-PRO exists as monomer and homodimer. Eight copies of nsp7 and eight copies of nsp8 assemble to form a heterohexadecamer. Nsp9 is a dimer. Nsp10 forms a dodecamer. Post-translationally, specific enzymatic cleavages in vivo by its own proteases yield mature proteins. 3CL-PRO and PL-PRO proteinases are autocatalytically processed.

It localises to the host membrane. Its subcellular location is the host cytoplasm. The protein resides in the host perinuclear region. The catalysed reaction is Thiol-dependent hydrolysis of ester, thioester, amide, peptide and isopeptide bonds formed by the C-terminal Gly of ubiquitin (a 76-residue protein attached to proteins as an intracellular targeting signal).. It catalyses the reaction TSAVLQ-|-SGFRK-NH2 and SGVTFQ-|-GKFKK the two peptides corresponding to the two self-cleavage sites of the SARS 3C-like proteinase are the two most reactive peptide substrates. The enzyme exhibits a strong preference for substrates containing Gln at P1 position and Leu at P2 position.. It carries out the reaction a 5'-end diphospho-ribonucleoside in mRNA + GTP + H(+) = a 5'-end (5'-triphosphoguanosine)-ribonucleoside in mRNA + diphosphate. The papain-like proteinase 1 (PL1-PRO) and papain-like proteinase 2 (PL2-PRO) are responsible for the cleavages located at the N-terminus of the replicase polyprotein. In addition, PLP2 possesses a deubiquitinating/deISGylating activity and processes both 'Lys-48'- and 'Lys-63'-linked polyubiquitin chains from cellular substrates. Antagonizes innate immune induction of type I interferon by blocking the phosphorylation, dimerization and subsequent nuclear translocation of host IRF-3. In terms of biological role, responsible for the majority of cleavages as it cleaves the C-terminus of replicase polyprotein at 11 sites. Recognizes substrates containing the core sequence [ILMVF]-Q-|-[SGACN]. Inhibited by the substrate-analog Cbz-Val-Asn-Ser-Thr-Leu-Gln-CMK. Also contains an ADP-ribose-1''-phosphate (ADRP)-binding function. Its function is as follows. Nsp7-nsp8 hexadecamer may possibly confer processivity to the polymerase, maybe by binding to dsRNA or by producing primers utilized by the latter. Functionally, catalytic subunit of viral RNA capping enzyme which catalyzes the RNA guanylyltransferase reaction for genomic and sub-genomic RNAs. The kinase-like NiRAN domain of NSP12 transfers RNA to the amino terminus of NSP9, forming a covalent RNA-protein intermediate. Subsequently, the NiRAN domain transfers RNA to GDP, forming the core cap structure GpppA-RNA. The NSP14 and NSP16 methyltransferases then add methyl groups to form functional cap structures. Binds to the 40S ribosomal subunit and inhibits host translation. The nsp1-40S ribosome complex further induces an endonucleolytic cleavage near the 5'UTR of host mRNAs, targeting them for degradation. By suppressing host gene expression, nsp1 facilitates efficient viral gene expression in infected cells and evasion from host immune response. This is Replicase polyprotein 1a from Murine coronavirus (strain A59) (MHV-A59).